Consider the following 312-residue polypeptide: Malate dehydrogenase (312 aa).

Residues 7 to 13 and D34 each bind NAD(+); that span reads GAAGGIG. Positions 81 and 87 each coordinate substrate. Residues N94 and 117–119 each bind NAD(+); that span reads ITN. 2 residues coordinate substrate: N119 and R153. H177 serves as the catalytic Proton acceptor. M228 lines the NAD(+) pocket.

Belongs to the LDH/MDH superfamily. MDH type 1 family. As to quaternary structure, homodimer.

It carries out the reaction (S)-malate + NAD(+) = oxaloacetate + NADH + H(+). Functionally, catalyzes the reversible oxidation of malate to oxaloacetate. This is Malate dehydrogenase from Mannheimia succiniciproducens (strain KCTC 0769BP / MBEL55E).